The chain runs to 95 residues: UPF0358 protein BCE_3996 (95 aa).

Belongs to the UPF0358 family.

In Bacillus cereus (strain ATCC 10987 / NRS 248), this protein is UPF0358 protein BCE_3996.